A 344-amino-acid chain; its full sequence is Protein L-Myc-1-A (344 aa).

Disordered regions lie at residues 100–162 (RLTT…DDEI) and 209–261 (PPEP…EDIV). Composition is skewed to polar residues over residues 102-112 (TTASPRATNPQ), 123-133 (PGVNSIEQNAN), and 236-255 (PALQ…SGSS). A bHLH domain is found at 261 to 313 (VKKKNHNYLERKRRNDLRSRFLALREEVPSLTRSTKTPKVVVLSKATEFLKGL). The segment at 313–341 (LVIQEQQLTAEKFKLWSRHQQLLRRISHL) is leucine-zipper.

As to quaternary structure, efficient DNA binding requires dimerization with another bHLH protein. Binds DNA as a heterodimer with MAX. In terms of tissue distribution, high levels in oocytes, modest levels in kidney and low levels in spleen.

The protein localises to the nucleus. The sequence is that of Protein L-Myc-1-A (mycl1-a) from Xenopus laevis (African clawed frog).